Consider the following 382-residue polypeptide: MSDTKVYRASTTAPVNIAVVKYWGKRDAKLNLPTNSSLSVTLSQDDLRTLTTASCSSTFTDGDSLTLNGESSDISGARTQACFRELRSRRAALEQADSSLPKLSSYPLKIVSENNFPTAAGLASSAAGFAALVQAIAFLYELPDSPSDLSLIARQGSGSACRSLFGGYVAWRMGEKEDGSDSKADLVAPASHWPEMRALILVASAAKKGVSSTSGMQQTVATSGLFKERITNVVPANMALMEEAIKDKDFPKFAEVTMRESNSFHATCADTYPPIFYMNDISRAAIRAVECINEKVGRTVAAYTFDAGPNCVIYYEEKDADIIVGAFYQALQGVGGFKEGAASARSSIEFDATLASTLKEGVSRVISTGVGEGPVKTDEFLA.

(R)-5-diphosphomevalonate is bound by residues 22–25 (YWGK), R78, 157–162 (SGSACR), and T213.

The protein belongs to the diphosphomevalonate decarboxylase family. In terms of assembly, homodimer.

It catalyses the reaction (R)-5-diphosphomevalonate + ATP = isopentenyl diphosphate + ADP + phosphate + CO2. It participates in isoprenoid biosynthesis; isopentenyl diphosphate biosynthesis via mevalonate pathway; isopentenyl diphosphate from (R)-mevalonate: step 3/3. In terms of biological role, diphosphomevalonate decarboxylase; part of the second module of ergosterol biosynthesis pathway that includes the middle steps of the pathway. MVD1 converts diphosphomevalonate into isopentenyl diphosphate. The second module is carried out in the vacuole and involves the formation of farnesyl diphosphate, which is also an important intermediate in the biosynthesis of ubiquinone, dolichol, heme and prenylated proteins. Activity by the mevalonate kinase ERG12 (FG05912) first converts mevalonate into 5-phosphomevalonate. 5-phosphomevalonate is then further converted to 5-diphosphomevalonate by the phosphomevalonate kinase ERG8 (FG09764). The diphosphomevalonate decarboxylase ERG19 (FG10424) then produces isopentenyl diphosphate. The isopentenyl-diphosphate delta-isomerase IDI1 (FG09722) then catalyzes the 1,3-allylic rearrangement of the homoallylic substrate isopentenyl (IPP) to its highly electrophilic allylic isomer, dimethylallyl diphosphate (DMAPP). Finally the farnesyl diphosphate synthase ERG20 (FG06784) catalyzes the sequential condensation of isopentenyl pyrophosphate with dimethylallyl pyrophosphate, and then with the resultant geranylpyrophosphate to the ultimate product farnesyl pyrophosphate. The protein is Diphosphomevalonate decarboxylase ERG19 of Gibberella zeae (strain ATCC MYA-4620 / CBS 123657 / FGSC 9075 / NRRL 31084 / PH-1) (Wheat head blight fungus).